We begin with the raw amino-acid sequence, 134 residues long: UPF0412 protein YaaI (134 aa).

The signal sequence occupies residues 1–23; that stretch reads MKSVITISASLAISLMLCCTAQA.

This sequence belongs to the UPF0412 family.

In Escherichia coli (strain UTI89 / UPEC), this protein is UPF0412 protein YaaI.